We begin with the raw amino-acid sequence, 688 residues long: GTPase IMAP family member 8 (688 aa).

A compositionally biased stretch (low complexity) spans 1–14 (MATSSHQGAAAGSQ). Residues 1–42 (MATSSHQGAAAGSQAEHRSCEASVGQGERPSASQGQEGNFKQ) form a disordered region. Positions 31–42 (SASQGQEGNFKQ) are enriched in polar residues. AIG1-type G domains follow at residues 46–247 (TSTL…MESS), 282–472 (MPEL…VIRE), and 473–677 (KELL…GQLK). The interval 55-62 (GKQGAGKS) is G1. GTP is bound by residues 55-63 (GKQGAGKSA) and Ser-76. Positions 82–86 (MVTDR) are G2. The interval 103-106 (DTPD) is G3. The segment at 172–175 (TRED) is G4. GTP contacts are provided by residues 173-175 (RED) and Asn-209. The interval 208 to 210 (NNK) is G5.

The protein belongs to the TRAFAC class TrmE-Era-EngA-EngB-Septin-like GTPase superfamily. AIG1/Toc34/Toc159-like paraseptin GTPase family. IAN subfamily. Abundantly expressed in the thymus (in thymocytes), spleen (in splenocytes), lymph node, followed by bone marrow and lung.

It is found in the endoplasmic reticulum. The protein localises to the golgi apparatus. The protein resides in the mitochondrion. Its subcellular location is the cytoplasm. It localises to the cytosol. Its function is as follows. Exerts an anti-apoptotic effect in the immune system and is involved in responses to infections. The sequence is that of GTPase IMAP family member 8 (Gimap8) from Mus musculus (Mouse).